The sequence spans 175 residues: Cytidylate kinase (175 aa).

Residue 7–15 (GQPGSGKTS) coordinates ATP.

This sequence belongs to the cytidylate kinase family. Type 2 subfamily.

It localises to the cytoplasm. It carries out the reaction CMP + ATP = CDP + ADP. It catalyses the reaction dCMP + ATP = dCDP + ADP. This chain is Cytidylate kinase, found in Methanocella arvoryzae (strain DSM 22066 / NBRC 105507 / MRE50).